The chain runs to 438 residues: UDP-N-acetylmuramoylalanine--D-glutamate ligase (438 aa).

105–111 (GSNGKTT) provides a ligand contact to ATP.

Belongs to the MurCDEF family.

It is found in the cytoplasm. It carries out the reaction UDP-N-acetyl-alpha-D-muramoyl-L-alanine + D-glutamate + ATP = UDP-N-acetyl-alpha-D-muramoyl-L-alanyl-D-glutamate + ADP + phosphate + H(+). The protein operates within cell wall biogenesis; peptidoglycan biosynthesis. Its function is as follows. Cell wall formation. Catalyzes the addition of glutamate to the nucleotide precursor UDP-N-acetylmuramoyl-L-alanine (UMA). The chain is UDP-N-acetylmuramoylalanine--D-glutamate ligase from Oenococcus oeni (strain ATCC BAA-331 / PSU-1).